Consider the following 478-residue polypeptide: Probable L-ascorbate peroxidase 8, chloroplastic (478 aa).

Over residues 1-13 (MAERIAASLLPAA) the composition is skewed to low complexity. 2 disordered regions span residues 1-31 (MAER…VSAA) and 44-66 (GGLR…RSGR). The transit peptide at 1–76 (MAERIAASLL…AGAGARAVVR (76 aa)) directs the protein to the chloroplast. Residues 14–26 (SPSPAPSPPPPRP) show a composition bias toward pro residues. The active-site Proton acceptor is His117. The disordered stretch occupies residues 245–276 (AHTLGRSRPDRSGWGKPETKYTKDGPGEPGGQ). A heme b-binding site is contributed by His246. Position 247 (Thr247) interacts with K(+). Residues 251–270 (SRPDRSGWGKPETKYTKDGP) are compositionally biased toward basic and acidic residues. K(+) contacts are provided by Thr279 and Asp286. The disordered stretch occupies residues 346–417 (AKFDPPEGFS…DNNGAAPQPE (72 aa)). Residues 369-381 (PAPAPAAAPPPPP) are compositionally biased toward pro residues. Over residues 394 to 406 (PVTVGAAVASSPA) the composition is skewed to low complexity. Residues 458–478 (YFLNIMLLIGGLAFLTSLLGS) traverse the membrane as a helical segment.

The protein belongs to the peroxidase family. Ascorbate peroxidase subfamily. In terms of assembly, interacts with SWEET11/OS8N3. Heme b serves as cofactor. In terms of tissue distribution, expressed in roots, leaves, stems and flowers. Expressed in leaves, shoots and panicles. Expressed at low levels in roots.

It is found in the plastid. The protein resides in the chloroplast thylakoid membrane. It catalyses the reaction L-ascorbate + H2O2 = L-dehydroascorbate + 2 H2O. Its function is as follows. Involved in defense response and tolerance to the bacterial pathogen Xanthomonas oryzae pv. oryzae (Xoo). Plays an important role in hydrogen peroxide removal during infection by Xoo. Involved in response to abiotic stress. Plays a role in hydrogen peroxide removal durings salt stress. The protein is Probable L-ascorbate peroxidase 8, chloroplastic of Oryza sativa subsp. japonica (Rice).